A 195-amino-acid polypeptide reads, in one-letter code: Calcineurin B homologous protein 1 (195 aa).

Gly2 carries the N-myristoyl glycine lipid modification. 4 EF-hand domains span residues 26-61, 66-101, 110-145, and 151-186; these read SQIT…AINP, IINA…KSKD, SRSN…MVGV, and QLGS…VDVE. Ca(2+) is bound by residues Asp123, Asp125, Asp127, Lys129, Glu134, Asp164, Asp166, Asp168, and Glu175.

The protein belongs to the calcineurin regulatory subunit family. CHP subfamily. In terms of assembly, monomer. Post-translationally, phosphorylated. In terms of processing, calcium-binding or N-myristoylation are necessary for the Na(+)/H(+) exchange activities.

Its subcellular location is the nucleus. The protein resides in the cytoplasm. It localises to the cytoskeleton. It is found in the endomembrane system. The protein localises to the endoplasmic reticulum-Golgi intermediate compartment. Its subcellular location is the endoplasmic reticulum. The protein resides in the cell membrane. It localises to the membrane. Functionally, calcium-binding protein involved in different processes such as regulation of vesicular trafficking, plasma membrane Na(+)/H(+) exchanger and gene transcription. Involved in the constitutive exocytic membrane traffic. Mediates the association between microtubules and membrane-bound organelles of the endoplasmic reticulum and Golgi apparatus and is also required for the targeting and fusion of transcytotic vesicles (TCV) with the plasma membrane. Functions as an integral cofactor in cell pH regulation by controlling plasma membrane-type Na(+)/H(+) exchange activity. Inhibits serum- and GTPase-stimulated Na(+)/H(+) exchange. Plays a role as an inhibitor of ribosomal RNA transcription. Acts as a negative regulator of the calcineurin/NFAT signaling pathway. The polypeptide is Calcineurin B homologous protein 1 (CHP1) (Gallus gallus (Chicken)).